The sequence spans 214 residues: Octanoyltransferase (214 aa).

A BPL/LPL catalytic domain is found at 28–210; it reads GTAEDALYLL…EFGKVFTDTA (183 aa). Substrate contacts are provided by residues 73-80, 140-142, and 153-155; these read RGGNITCH, SIG, and GLS. Cys171 functions as the Acyl-thioester intermediate in the catalytic mechanism.

The protein belongs to the LipB family.

The protein resides in the cytoplasm. It catalyses the reaction octanoyl-[ACP] + L-lysyl-[protein] = N(6)-octanoyl-L-lysyl-[protein] + holo-[ACP] + H(+). The protein operates within protein modification; protein lipoylation via endogenous pathway; protein N(6)-(lipoyl)lysine from octanoyl-[acyl-carrier-protein]: step 1/2. Catalyzes the transfer of endogenously produced octanoic acid from octanoyl-acyl-carrier-protein onto the lipoyl domains of lipoate-dependent enzymes. Lipoyl-ACP can also act as a substrate although octanoyl-ACP is likely to be the physiological substrate. This chain is Octanoyltransferase, found in Maridesulfovibrio salexigens (strain ATCC 14822 / DSM 2638 / NCIMB 8403 / VKM B-1763) (Desulfovibrio salexigens).